The primary structure comprises 302 residues: Glutaminase (302 aa).

7 residues coordinate substrate: serine 61, asparagine 111, glutamate 155, asparagine 162, tyrosine 186, tyrosine 238, and valine 256.

This sequence belongs to the glutaminase family. As to quaternary structure, homotetramer.

The catalysed reaction is L-glutamine + H2O = L-glutamate + NH4(+). The protein is Glutaminase of Pseudomonas putida (strain ATCC 700007 / DSM 6899 / JCM 31910 / BCRC 17059 / LMG 24140 / F1).